A 378-amino-acid polypeptide reads, in one-letter code: uncharacterized protein (378 aa).

11 consecutive transmembrane segments (helical) span residues 12-34 (SLAF…STFF), 44-66 (VKIY…IFLG), 92-112 (SIAL…LMLI), 132-154 (GFAS…IFLA), 161-180 (EVYA…SIIT), 200-222 (TFLL…IAMM), 235-257 (VEIY…FWGV), 267-285 (VFPL…LFFA), 290-312 (LIFV…RVYI), 327-349 (FLSL…FLFI), and 356-373 (LSAL…FIYL).

It localises to the cell membrane. This is an uncharacterized protein from Aquifex aeolicus (strain VF5).